The chain runs to 268 residues: 5'-nucleotidase SurE (268 aa).

Residues Asp-8, Asp-9, Ser-40, and Asn-98 each coordinate a divalent metal cation.

Belongs to the SurE nucleotidase family. Requires a divalent metal cation as cofactor.

It localises to the cytoplasm. It catalyses the reaction a ribonucleoside 5'-phosphate + H2O = a ribonucleoside + phosphate. Nucleotidase that shows phosphatase activity on nucleoside 5'-monophosphates. This chain is 5'-nucleotidase SurE, found in Trichodesmium erythraeum (strain IMS101).